Reading from the N-terminus, the 509-residue chain is Glycogen synthase (509 aa).

Position 47 (Lys47) interacts with ADP-alpha-D-glucose.

The protein belongs to the glycosyltransferase 1 family. Bacterial/plant glycogen synthase subfamily.

The enzyme catalyses [(1-&gt;4)-alpha-D-glucosyl](n) + ADP-alpha-D-glucose = [(1-&gt;4)-alpha-D-glucosyl](n+1) + ADP + H(+). It functions in the pathway glycan biosynthesis; glycogen biosynthesis. Synthesizes alpha-1,4-glucan chains using ADP-glucose. This chain is Glycogen synthase, found in Xanthomonas oryzae pv. oryzae (strain MAFF 311018).